Consider the following 144-residue polypeptide: MFMGEYDHQLDTKGRMIIPSKFRYDLNERFIITRGLDKCLFGYTLDEWQQIEEKMKTLPMTKKDARKFMRMFFSGAVEVELDKQGRINIPQNLRKYANLTKECTVIGVSNRIEIWDRETWNDFYERNLKKSFEDIAEDLIDFDF.

SpoVT-AbrB domains follow at residues 5–47 (EYDH…TLDE) and 76–119 (AVEV…DRET).

It belongs to the MraZ family. Forms oligomers.

It is found in the cytoplasm. The protein resides in the nucleoid. The chain is Transcriptional regulator MraZ from Staphylococcus aureus.